A 180-amino-acid polypeptide reads, in one-letter code: Large ribosomal subunit protein uL5c (180 aa).

This sequence belongs to the universal ribosomal protein uL5 family. In terms of assembly, part of the 50S ribosomal subunit; contacts the 5S rRNA.

The protein resides in the plastid. It localises to the chloroplast. In terms of biological role, binds 5S rRNA, forms part of the central protuberance of the 50S subunit. The sequence is that of Large ribosomal subunit protein uL5c (rpl5) from Chlorella vulgaris (Green alga).